The primary structure comprises 255 residues: Flagellar brake protein YcgR (255 aa).

A PilZ domain is found at 130–245; that stretch reads QRREHFRVPL…MAAHLQRFVM (116 aa).

It belongs to the YcgR family. As to quaternary structure, monomer. Interacts with the flagellar basal bodies.

It is found in the bacterial flagellum basal body. Its function is as follows. Acts as a flagellar brake, regulating swimming and swarming in a bis-(3'-5') cyclic diguanylic acid (c-di-GMP)-dependent manner. Binds 1 c-di-GMP dimer per subunit. Increasing levels of c-di-GMP lead to decreased motility. This Thiobacillus denitrificans (strain ATCC 25259 / T1) protein is Flagellar brake protein YcgR.